A 426-amino-acid chain; its full sequence is Putative FBD-associated F-box protein At5g53635 (426 aa).

Positions 1–45 (MISQLPDPLICHILSHLPIKDLVTTRVLSTRWRSLWLWLPCLELN) constitute an F-box domain. Residues 353–405 (MIQFGSSLVPECLLSSLEFVDIRIPFRGHLEVMKLVRYFLENSAILKKLSLDH) form the FBD domain.

This chain is Putative FBD-associated F-box protein At5g53635, found in Arabidopsis thaliana (Mouse-ear cress).